Reading from the N-terminus, the 1279-residue chain is Mediator of DNA damage checkpoint protein 1 (1279 aa).

A disordered region spans residues 1–22; it reads MENTQVIDWDAEEEEETEISSG. The tract at residues 1-150 is interaction with CHEK2; that stretch reads MENTQVIDWD…PRSLLTIEKT (150 aa). Residues 2–222 form an interaction with the MRN complex region; sequence ENTQVIDWDA…SSPFGLGSDT (221 aa). Thr-4 carries the post-translational modification Phosphothreonine. Over residues 9-18 the composition is skewed to acidic residues; the sequence is WDAEEEEETE. An FHA domain is found at 54-105; the sequence is NVVGRSPDCSVALPFPSISKQHAVIEISAWNKAPILQDCGSLNGTQIVKPPR. A Phosphothreonine modification is found at Thr-146. Disordered regions lie at residues 156 to 394, 409 to 634, and 714 to 744; these read RSQN…EEVS, LWSG…KHAK, and ETSE…PVPT. Ser-168 and Ser-176 each carry phosphoserine. Residues 179–192 are compositionally biased toward polar residues; it reads SVANGSRNTASPSA. A phosphoserine mark is found at Ser-198 and Ser-220. Residue Thr-222 is modified to Phosphothreonine. The segment covering 264–277 has biased composition (basic and acidic residues); the sequence is TKDKFKDTKMKEEA. Over residues 278-292 the composition is skewed to low complexity; the sequence is GSAGVPVGSVVEGSP. Phosphoserine is present on Ser-298. Position 300 is a phosphothreonine (Thr-300). Position 314 is a phosphoserine (Ser-314). Thr-316 carries the post-translational modification Phosphothreonine. A phosphoserine mark is found at Ser-350 and Ser-354. Position 356 is a phosphothreonine (Thr-356). Phosphoserine is present on residues Ser-372 and Ser-380. Acidic residues predominate over residues 381-393; sequence DTDEEERGEEEEV. Thr-382 carries the phosphothreonine modification. Residues Ser-394, Ser-411, Ser-421, Ser-434, and Ser-438 each carry the phosphoserine modification. Residues 421-435 show a composition bias toward polar residues; it reads SQPQVLVERSQSASG. Thr-440 bears the Phosphothreonine mark. Ser-457 is subject to Phosphoserine. A Phosphothreonine modification is found at Thr-466. A phosphoserine mark is found at Ser-488, Ser-489, Ser-550, Ser-587, and Ser-589. Residues 545–561 show a composition bias toward polar residues; it reads QEGSSSPVADIRMSQQP. Residues 620 to 634 are compositionally biased toward basic and acidic residues; that stretch reads GREREAHVGGTKHAK. Residues Ser-730 and Ser-745 each carry the phosphoserine modification. Lys-764 is modified (N6-acetyllysine). Positions 772–1086 are disordered; it reads QMMPDGKASG…TKPNQEAAAP (315 aa). Phosphoserine is present on residues Ser-793, Ser-801, and Ser-824. Residues 798–817 show a composition bias toward low complexity; that stretch reads ASASPQSLLTSQSQKQSTPQ. Composition is skewed to polar residues over residues 862–889, 901–929, and 942–956; these read TCPT…STRT, QPST…TSVN, and PLTS…NLNP. Residue Thr-889 is modified to Phosphothreonine. Thr-951 carries the post-translational modification Phosphothreonine. Lys-991 participates in a covalent cross-link: Glycyl lysine isopeptide (Lys-Gly) (interchain with G-Cter in SUMO2). Residues 994-1014 show a composition bias toward low complexity; sequence STPAEPEPQSSASQSSGASEA. Phosphoserine is present on residues Ser-1008, Ser-1009, Ser-1012, and Ser-1016. Over residues 1032–1047 the composition is skewed to basic and acidic residues; that stretch reads VVKEEDPGEIQVKEEP. Residue Lys-1034 forms a Glycyl lysine isopeptide (Lys-Gly) (interchain with G-Cter in SUMO1); alternate linkage. Lys-1034 participates in a covalent cross-link: Glycyl lysine isopeptide (Lys-Gly) (interchain with G-Cter in SUMO2); alternate. Position 1054 is a phosphothreonine (Thr-1054). 2 consecutive BRCT domains span residues 1085–1163 and 1184–1275; these read APKV…DYLV and RERR…FVLS.

As to quaternary structure, homodimer. Interacts with H2AX, which requires phosphorylation of H2AX on 'Ser-139'. Interacts with the MRN complex, composed of MRE11, RAD50, and NBN. Interacts with CHEK2, which requires ATM-mediated phosphorylation of 'Thr-68' within the FHA domain of CHEK2. Interacts constitutively with the BRCA1-BARD1 complex, SMC1A and TP53BP1. Interacts with ATM and FANCD2, and these interactions are reduced upon DNA damage. Also interacts with the PRKDC complex, composed of XRCC6/KU70, XRCC5/KU80 and PRKDC/XRCC7. This interaction may be required for PRKDC autophosphorylation, which is essential for DNA double strand break (DSB) repair. When phosphorylated by ATM, interacts with RNF8 (via FHA domain). Interacts with CEP164. When phosphorylated, interacts with APTX (via FHA-like domain). Interacts (when phosphorylated) with TOPBP1; promoting TOPBP1 localization to DNA damage sites during mitosis. Interacts (when phosphorylated) with NBN; promoting NBN and MRN complex localization to DNA damage sites. Phosphorylated upon exposure to ionizing radiation (IR), ultraviolet radiation (UV), and hydroxyurea (HU). Phosphorylation in response to IR requires ATM, NBN, and possibly CHEK2. Also phosphorylated during the G2/M phase of the cell cycle and during activation of the mitotic spindle checkpoint. Phosphorylation at Thr-4 by ATM stabilizes and enhances homodimerization via the FHA domain. Phosphorylated at Ser-168 and Ser-198 by CK2 in response to DNA damage during mitosis, promoting interaction with TOPBP1. Phosphorylated by CK2 in response to DNA damage, promoting interaction with NBN and recruitment of the MRN complex to DNA damage sites. Post-translationally, sumoylation at Lys-1034 by PIAS4 following DNA damage promotes ubiquitin-mediated degradation. In terms of processing, ubiquitinated by RNF4, leading to proteasomal degradation; undergoes 'Lys-48'-linked polyubiquitination.

The protein resides in the nucleus. It is found in the chromosome. In terms of biological role, histone reader protein required for checkpoint-mediated cell cycle arrest in response to DNA damage within both the S phase and G2/M phases of the cell cycle. Specifically recognizes and binds histone H2AX phosphorylated at 'Ser-139', a marker of DNA damage, serving as a scaffold for the recruitment of DNA repair and signal transduction proteins to discrete foci of DNA damage sites. Also required for downstream events subsequent to the recruitment of these proteins. These include phosphorylation and activation of the ATM, CHEK1 and CHEK2 kinases, and stabilization of TP53/p53 and apoptosis. ATM and CHEK2 may also be activated independently by a parallel pathway mediated by TP53BP1. Required for chromosomal stability during mitosis by promoting recruitment of TOPBP1 to DNA double strand breaks (DSBs): TOPBP1 forms filamentous assemblies that bridge MDC1 and tether broken chromosomes during mitosis. Required for the repair of DSBs via homologous recombination by promoting recruitment of NBN component of the MRN complex to DSBs. This chain is Mediator of DNA damage checkpoint protein 1 (Mdc1), found in Rattus norvegicus (Rat).